A 360-amino-acid polypeptide reads, in one-letter code: Nucleoporin SEH1-A (360 aa).

WD repeat units lie at residues 10 to 49 (DHKD…NWHC), 55 to 96 (THSG…SNDK), 111 to 152 (DSRT…NLSQ), 160 to 210 (SCKL…RKYA), 217 to 258 (SVSD…KELS), and 276 to 315 (NHNS…NWKC).

Belongs to the WD repeat SEC13 family. As to quaternary structure, component of the Nup107-160 subcomplex of the nuclear pore complex (NPC). The Nup107-160 subcomplex includes NUP160, NUP133, NUP107, NUP98, NUP85, NUP43, NUP37, SEH1 and SEC13. Component of the GATOR2 subcomplex, composed of MIOS, SEC13, SEH1L, WDR24 and WDR59. The GATOR2 complex interacts with CASTOR1 and CASTOR2; the interaction is negatively regulated by arginine. The GATOR2 complex interacts with SESN1, SESN2 and SESN3; the interaction is negatively regulated by amino acids.

It is found in the chromosome. The protein localises to the centromere. The protein resides in the kinetochore. Its subcellular location is the nucleus. It localises to the nuclear pore complex. It is found in the lysosome membrane. With respect to regulation, the GATOR2 complex is negatively regulated by the upstream amino acid sensors CASTOR1 and SESN2, which sequester the GATOR2 complex in absence of amino acids. In the presence of abundant amino acids, GATOR2 is released from CASTOR1 and SESN2 and activated. Functionally, component of the Nup107-160 subcomplex of the nuclear pore complex (NPC). The Nup107-160 subcomplex is required for the assembly of a functional NPC. The Nup107-160 subcomplex is also required for normal kinetochore microtubule attachment, mitotic progression and chromosome segregation. This subunit plays a role in recruitment of the Nup107-160 subcomplex to the kinetochore. As a component of the GATOR2 complex, functions as an activator of the amino acid-sensing branch of the mTORC1 signaling pathway. The GATOR2 complex indirectly activates mTORC1 through the inhibition of the GATOR1 subcomplex. GATOR2 probably acts as an E3 ubiquitin-protein ligase toward GATOR1. In the presence of abundant amino acids, the GATOR2 complex mediates ubiquitination of the NPRL2 core component of the GATOR1 complex, leading to GATOR1 inactivation. In the absence of amino acids, GATOR2 is inhibited, activating the GATOR1 complex. This chain is Nucleoporin SEH1-A (seh1l-a), found in Xenopus laevis (African clawed frog).